The sequence spans 248 residues: Triosephosphate isomerase (248 aa).

The substrate site is built by Asn10 and Lys12. The Electrophile role is filled by His95. The active-site Proton acceptor is Glu165.

The protein belongs to the triosephosphate isomerase family. Homodimer.

It is found in the cytoplasm. It carries out the reaction D-glyceraldehyde 3-phosphate = dihydroxyacetone phosphate. It functions in the pathway carbohydrate biosynthesis; gluconeogenesis. It participates in carbohydrate degradation; glycolysis; D-glyceraldehyde 3-phosphate from glycerone phosphate: step 1/1. The sequence is that of Triosephosphate isomerase (TPI1) from Candida albicans (strain SC5314 / ATCC MYA-2876) (Yeast).